The chain runs to 120 residues: uncharacterized protein (120 aa).

The tract at residues 80–99 (PTRKLQTPLNEPPRTWRKTA) is disordered.

This is an uncharacterized protein from Goose circovirus (GoCV).